The following is a 681-amino-acid chain: Phosphomethylpyrimidine synthase (681 aa).

The span at 1-13 (MSNNTTSLPAENS) shows a compositional bias: polar residues. The segment at 1-29 (MSNNTTSLPAENSSHPRKGTPIRKKQREE) is disordered. Over residues 15-25 (HPRKGTPIRKK) the composition is skewed to basic residues. Residues N254, M283, Y312, H348, 368–370 (SRG), 409–412 (DGLR), and E448 each bind substrate. A Zn(2+)-binding site is contributed by H452. Y475 is a binding site for substrate. H516 is a binding site for Zn(2+). Residues C596, C599, and C604 each contribute to the [4Fe-4S] cluster site. Residues 658-667 (FRSRGSELYH) are compositionally biased toward basic and acidic residues. Residues 658 to 681 (FRSRGSELYHRPANLSAEANNEPT) are disordered.

It belongs to the ThiC family. In terms of assembly, homodimer. It depends on [4Fe-4S] cluster as a cofactor.

It carries out the reaction 5-amino-1-(5-phospho-beta-D-ribosyl)imidazole + S-adenosyl-L-methionine = 4-amino-2-methyl-5-(phosphooxymethyl)pyrimidine + CO + 5'-deoxyadenosine + formate + L-methionine + 3 H(+). The protein operates within cofactor biosynthesis; thiamine diphosphate biosynthesis. Its function is as follows. Catalyzes the synthesis of the hydroxymethylpyrimidine phosphate (HMP-P) moiety of thiamine from aminoimidazole ribotide (AIR) in a radical S-adenosyl-L-methionine (SAM)-dependent reaction. The protein is Phosphomethylpyrimidine synthase of Yersinia pseudotuberculosis serotype I (strain IP32953).